A 133-amino-acid chain; its full sequence is FPRL1 inhibitory protein (133 aa).

Residues 1-28 (MKKNITKTIIASTVIAAGLLTQTNDAKA) form the signal peptide.

It belongs to the CHIPS/FLIPr family.

The protein localises to the secreted. May be involved in countering the first line of host defense mechanisms. Impairs the leukocyte response to FPRL1 agonists by binding directly to host FPRL1. Exerts, in vitro, anti-inflammatory activity by inhibiting calcium mobilization and cell migration toward chemoattractants. In Staphylococcus aureus (strain Newman), this protein is FPRL1 inhibitory protein (flr).